The sequence spans 481 residues: ATP synthase subunit beta, chloroplastic (481 aa).

163-170 is a binding site for ATP; that stretch reads GGAGVGKT.

It belongs to the ATPase alpha/beta chains family. As to quaternary structure, F-type ATPases have 2 components, CF(1) - the catalytic core - and CF(0) - the membrane proton channel. CF(1) has five subunits: alpha(3), beta(3), gamma(1), delta(1), epsilon(1). CF(0) has four main subunits: a(1), b(1), b'(1) and c(9-12).

It localises to the plastid. The protein resides in the chloroplast thylakoid membrane. The enzyme catalyses ATP + H2O + 4 H(+)(in) = ADP + phosphate + 5 H(+)(out). Its function is as follows. Produces ATP from ADP in the presence of a proton gradient across the membrane. The catalytic sites are hosted primarily by the beta subunits. This is ATP synthase subunit beta, chloroplastic from Tupiella akineta (Green alga).